A 557-amino-acid chain; its full sequence is Dihydroxy-acid dehydratase (557 aa).

Asp78 provides a ligand contact to Mg(2+). Cys119 provides a ligand contact to [2Fe-2S] cluster. 2 residues coordinate Mg(2+): Asp120 and Lys121. Lys121 bears the N6-carboxylysine mark. A [2Fe-2S] cluster-binding site is contributed by Cys191. Residue Glu442 coordinates Mg(2+). Residue Ser468 is the Proton acceptor of the active site.

The protein belongs to the IlvD/Edd family. In terms of assembly, homodimer. [2Fe-2S] cluster serves as cofactor. It depends on Mg(2+) as a cofactor.

The enzyme catalyses (2R)-2,3-dihydroxy-3-methylbutanoate = 3-methyl-2-oxobutanoate + H2O. The catalysed reaction is (2R,3R)-2,3-dihydroxy-3-methylpentanoate = (S)-3-methyl-2-oxopentanoate + H2O. It participates in amino-acid biosynthesis; L-isoleucine biosynthesis; L-isoleucine from 2-oxobutanoate: step 3/4. The protein operates within amino-acid biosynthesis; L-valine biosynthesis; L-valine from pyruvate: step 3/4. Functionally, functions in the biosynthesis of branched-chain amino acids. Catalyzes the dehydration of (2R,3R)-2,3-dihydroxy-3-methylpentanoate (2,3-dihydroxy-3-methylvalerate) into 2-oxo-3-methylpentanoate (2-oxo-3-methylvalerate) and of (2R)-2,3-dihydroxy-3-methylbutanoate (2,3-dihydroxyisovalerate) into 2-oxo-3-methylbutanoate (2-oxoisovalerate), the penultimate precursor to L-isoleucine and L-valine, respectively. The protein is Dihydroxy-acid dehydratase of Syntrophobacter fumaroxidans (strain DSM 10017 / MPOB).